The sequence spans 125 residues: Testis-specific protein LINC02914 (125 aa).

Positions Met1–Ala12 are enriched in basic and acidic residues. Positions Met1 to Gln45 are disordered.

Expressed in testes and ejaculated spermatozoa (at protein level).

Its subcellular location is the cytoplasm. It is found in the nucleus. The protein resides in the cell projection. The protein localises to the cilium. It localises to the flagellum. Its function is as follows. May play a role in the flagellum biology. The chain is Testis-specific protein LINC02914 from Homo sapiens (Human).